A 154-amino-acid polypeptide reads, in one-letter code: 3-hydroxyacyl-[acyl-carrier-protein] dehydratase FabZ (154 aa).

His54 is a catalytic residue.

Belongs to the thioester dehydratase family. FabZ subfamily.

The protein resides in the cytoplasm. The catalysed reaction is a (3R)-hydroxyacyl-[ACP] = a (2E)-enoyl-[ACP] + H2O. Its function is as follows. Involved in unsaturated fatty acids biosynthesis. Catalyzes the dehydration of short chain beta-hydroxyacyl-ACPs and long chain saturated and unsaturated beta-hydroxyacyl-ACPs. The sequence is that of 3-hydroxyacyl-[acyl-carrier-protein] dehydratase FabZ from Chlamydia abortus (strain DSM 27085 / S26/3) (Chlamydophila abortus).